The chain runs to 197 residues: UPF0301 protein AnaeK_4073 (197 aa).

It belongs to the UPF0301 (AlgH) family.

This chain is UPF0301 protein AnaeK_4073, found in Anaeromyxobacter sp. (strain K).